The primary structure comprises 316 residues: GTP cyclohydrolase FolE2 2 (316 aa).

Belongs to the GTP cyclohydrolase IV family.

The catalysed reaction is GTP + H2O = 7,8-dihydroneopterin 3'-triphosphate + formate + H(+). Its pathway is cofactor biosynthesis; 7,8-dihydroneopterin triphosphate biosynthesis; 7,8-dihydroneopterin triphosphate from GTP: step 1/1. Converts GTP to 7,8-dihydroneopterin triphosphate. This chain is GTP cyclohydrolase FolE2 2, found in Burkholderia orbicola (strain MC0-3).